The chain runs to 91 residues: Protein transport protein sft1 (91 aa).

The Cytoplasmic portion of the chain corresponds to 1-68; the sequence is MNDQNERRLE…RVVRSAGRRR (68 aa). Residues 69–86 form a helical; Anchor for type IV membrane protein membrane-spanning segment; it reads IMTMVLAIVGSILIIYYA. At 87 to 91 the chain is on the lumenal side; that stretch reads SKWFF.

Component of a SNARE complex consisting of sed5, gos1, ykt6 and sft1.

It localises to the golgi apparatus membrane. Functionally, vesicle SNARE required for retrograde transport within the Golgi complex. The sequence is that of Protein transport protein sft1 (sft1) from Schizosaccharomyces pombe (strain 972 / ATCC 24843) (Fission yeast).